Here is a 205-residue protein sequence, read N- to C-terminus: MSEKGGKGLKSSLKSKDGGKDGSSTKLKKGRKIHFDQRTPPANYKILNVSSDQQPFQSSAAKCGKSDKPTKSSKNSLHSFELKDLPENAECMMDCEAFQILDGIKGQLVGLSEDPSIKIPVSYDRALAYVESCVHYTNPQSVRKVLEPLKTYGISDGEMCVIANASSESVDEVLAFIPSLKTKKEVINQPLQDALEELSKLKKSE.

Residues 1–79 (MSEKGGKGLK…TKSSKNSLHS (79 aa)) are disordered. Residues 48–60 (NVSSDQQPFQSSA) are compositionally biased toward polar residues.

This sequence belongs to the eukaryotic RPB4 RNA polymerase subunit family. Component of the RNA polymerase IV and V complexes. Interacts with NRPD1 and NRPE1. In terms of tissue distribution, expressed in shoot meristematic region and in root tips. Detected in cotyledons, flowers and young leaves.

The protein resides in the nucleus. Functionally, DNA-dependent RNA polymerase catalyzes the transcription of DNA into RNA using the four ribonucleoside triphosphates as substrates. Component of RNA polymerases IV and V which mediate short-interfering RNAs (siRNA) accumulation and subsequent RNA-directed DNA methylation-dependent (RdDM) transcriptional gene silencing (TGS) of endogenous repeated sequences, including transposable elements. Required for the de novo DNA methylation directed by the RdDM pathway. In Arabidopsis thaliana (Mouse-ear cress), this protein is DNA-directed RNA polymerases IV and V subunit 4 (NRPD4).